Here is a 205-residue protein sequence, read N- to C-terminus: Methylthioribulose-1-phosphate dehydratase (205 aa).

Residues H96 and H98 each coordinate Zn(2+).

The protein belongs to the aldolase class II family. MtnB subfamily. The cofactor is Zn(2+).

It carries out the reaction 5-(methylsulfanyl)-D-ribulose 1-phosphate = 5-methylsulfanyl-2,3-dioxopentyl phosphate + H2O. Its pathway is amino-acid biosynthesis; L-methionine biosynthesis via salvage pathway; L-methionine from S-methyl-5-thio-alpha-D-ribose 1-phosphate: step 2/6. Its function is as follows. Catalyzes the dehydration of methylthioribulose-1-phosphate (MTRu-1-P) into 2,3-diketo-5-methylthiopentyl-1-phosphate (DK-MTP-1-P). The protein is Methylthioribulose-1-phosphate dehydratase of Pseudomonas aeruginosa (strain ATCC 15692 / DSM 22644 / CIP 104116 / JCM 14847 / LMG 12228 / 1C / PRS 101 / PAO1).